We begin with the raw amino-acid sequence, 404 residues long: MKRTIIMMLDSFGVGASADAASFGDVGSDTFGHIAKACAEGKADIGREGPLKLPNLARLGLGHAAMESTGAFAPGFGDNVELIGAYGHAQELSSGKDTPSGHWEMAGVPVLFEWGYFSEHQNSFPKELTDKILARAGLDGFLGNCHASGTTILEELGEEHMRSGKPIFYTSADSVFQIACHEETFGLDNLYRLCEITREELAPYNIGRVIARPFNGTGQSDFARTGNRKDYSLEPPAKTVLDKLKAAGGEVVSVGKIADIYAYCGITKKVKANGLEDLFDATLAEVKSAGDNTIVFTNFVDFDSHYGHRRDVAGYAKGLEYFDARLPEMLALLGEDDLLILTADHGCDPTWQGTDHTREYVPVLAYGAGLKAGSLGRRNSFADIGQSIASHFKLEPMAYGESFI.

Mn(2+) contacts are provided by D10, D303, H308, D344, H345, and H356.

The protein belongs to the phosphopentomutase family. Requires Mn(2+) as cofactor.

The protein localises to the cytoplasm. It catalyses the reaction 2-deoxy-alpha-D-ribose 1-phosphate = 2-deoxy-D-ribose 5-phosphate. It carries out the reaction alpha-D-ribose 1-phosphate = D-ribose 5-phosphate. The protein operates within carbohydrate degradation; 2-deoxy-D-ribose 1-phosphate degradation; D-glyceraldehyde 3-phosphate and acetaldehyde from 2-deoxy-alpha-D-ribose 1-phosphate: step 1/2. Isomerase that catalyzes the conversion of deoxy-ribose 1-phosphate (dRib-1-P) and ribose 1-phosphate (Rib-1-P) to deoxy-ribose 5-phosphate (dRib-5-P) and ribose 5-phosphate (Rib-5-P), respectively. The sequence is that of Phosphopentomutase from Shewanella putrefaciens (strain CN-32 / ATCC BAA-453).